Reading from the N-terminus, the 651-residue chain is p-hydroxybenzoic acid efflux pump subunit AaeB (651 aa).

11 helical membrane-spanning segments follow: residues F11 to L31, A41 to I61, L67 to I87, V91 to V111, F119 to L139, E150 to I170, L368 to V388, F405 to P425, Q429 to V449, L460 to F480, and L481 to I501.

The protein belongs to the aromatic acid exporter ArAE (TC 2.A.85) family.

The protein resides in the cell inner membrane. Its function is as follows. Forms an efflux pump with AaeA. Could function as a metabolic relief valve, allowing to eliminate certain compounds when they accumulate to high levels in the cell. The sequence is that of p-hydroxybenzoic acid efflux pump subunit AaeB from Yersinia enterocolitica serotype O:8 / biotype 1B (strain NCTC 13174 / 8081).